The sequence spans 248 residues: tRNA (guanine-N(7)-)-methyltransferase (248 aa).

The S-adenosyl-L-methionine site is built by glutamate 80, glutamate 105, aspartate 132, and aspartate 155. Aspartate 155 is a catalytic residue. Substrate-binding positions include lysine 159, aspartate 191, and 223-226 (TKFE).

The protein belongs to the class I-like SAM-binding methyltransferase superfamily. TrmB family.

The catalysed reaction is guanosine(46) in tRNA + S-adenosyl-L-methionine = N(7)-methylguanosine(46) in tRNA + S-adenosyl-L-homocysteine. It functions in the pathway tRNA modification; N(7)-methylguanine-tRNA biosynthesis. Its function is as follows. Catalyzes the formation of N(7)-methylguanine at position 46 (m7G46) in tRNA. The protein is tRNA (guanine-N(7)-)-methyltransferase of Nocardioides sp. (strain ATCC BAA-499 / JS614).